A 322-amino-acid chain; its full sequence is MDYDIDAIIEKLVKARNGKPSKQVQLSDAEIRYLCTTSRSIFLSQPMLLELEAPLKICGDIHGQYSDLLRLFEYGGYPPDANYLFLGDYVDRGKQSLEVICLLFAYKIKYPENFFLLRGNHEFASINRIYGFYDECKRRYSIKLWKTFTDCFNCMPVAAVIDEKIFCMHGGLSPDLNSLDQIQRIIRPTDIPDTGLLCDLVWSDPEKDLTGWGENDRGVSYTFGADVVSRFLQKHDLDLICRAHQVVEDGYEFFGKRQLVTIFSAPNYCGEFDNVGAMMSVNEDLLCSFQILKPAEKRQRVSQSSIKESKSATNSLKKSKNN.

Mn(2+) contacts are provided by Asp60, His62, Asp88, and Asn120. The Proton donor role is filled by His121. Residues His169 and His244 each contribute to the Mn(2+) site. Residues 298–322 (RQRVSQSSIKESKSATNSLKKSKNN) form a disordered region. Polar residues predominate over residues 301-316 (VSQSSIKESKSATNSL).

Belongs to the PPP phosphatase family. PP-1 subfamily. Mn(2+) serves as cofactor.

The catalysed reaction is O-phospho-L-seryl-[protein] + H2O = L-seryl-[protein] + phosphate. The enzyme catalyses O-phospho-L-threonyl-[protein] + H2O = L-threonyl-[protein] + phosphate. Functionally, essential role in cell cycle control. PP1 is perhaps required for exit from mitosis. The sequence is that of Serine/threonine-protein phosphatase PP1-2 (sds21) from Schizosaccharomyces pombe (strain 972 / ATCC 24843) (Fission yeast).